We begin with the raw amino-acid sequence, 478 residues long: Glutamate--tRNA ligase (478 aa).

The 'HIGH' region motif lies at 15-25; that stretch reads PSPTGFLHIGG. Positions 244–248 match the 'KMSKS' region motif; sequence KLSKR. K247 contributes to the ATP binding site.

It belongs to the class-I aminoacyl-tRNA synthetase family. Glutamate--tRNA ligase type 1 subfamily. As to quaternary structure, monomer.

The protein resides in the cytoplasm. The enzyme catalyses tRNA(Glu) + L-glutamate + ATP = L-glutamyl-tRNA(Glu) + AMP + diphosphate. Its function is as follows. Catalyzes the attachment of glutamate to tRNA(Glu) in a two-step reaction: glutamate is first activated by ATP to form Glu-AMP and then transferred to the acceptor end of tRNA(Glu). This is Glutamate--tRNA ligase from Bradyrhizobium sp. (strain ORS 278).